A 302-amino-acid chain; its full sequence is Sulfate adenylyltransferase subunit 2 (302 aa).

The segment at 280 to 302 (RQGRLIDSDQSASMEQKKRQGYF) is disordered.

Belongs to the PAPS reductase family. CysD subfamily. In terms of assembly, heterodimer composed of CysD, the smaller subunit, and CysN.

The enzyme catalyses sulfate + ATP + H(+) = adenosine 5'-phosphosulfate + diphosphate. It participates in sulfur metabolism; hydrogen sulfide biosynthesis; sulfite from sulfate: step 1/3. In terms of biological role, with CysN forms the ATP sulfurylase (ATPS) that catalyzes the adenylation of sulfate producing adenosine 5'-phosphosulfate (APS) and diphosphate, the first enzymatic step in sulfur assimilation pathway. APS synthesis involves the formation of a high-energy phosphoric-sulfuric acid anhydride bond driven by GTP hydrolysis by CysN coupled to ATP hydrolysis by CysD. This is Sulfate adenylyltransferase subunit 2 from Shewanella oneidensis (strain ATCC 700550 / JCM 31522 / CIP 106686 / LMG 19005 / NCIMB 14063 / MR-1).